A 147-amino-acid chain; its full sequence is Acidic phospholipase A2 beta-bungarotoxin A3 chain (147 aa).

A signal peptide spans 1 to 19; the sequence is MYPAHLLVLSAVCVSLLGA. Positions 20 to 27 are excised as a propeptide; it reads ANIPPHPL. 6 cysteine pairs are disulfide-bonded: Cys-54–Cys-146, Cys-56–Cys-72, Cys-71–Cys-127, Cys-78–Cys-120, Cys-88–Cys-113, and Cys-106–Cys-118. 3 residues coordinate Ca(2+): Tyr-55, Gly-57, and Gly-59. The active site involves His-75. Asp-76 is a binding site for Ca(2+). Asp-121 is a catalytic residue.

It belongs to the phospholipase A2 family. Group I subfamily. D49 sub-subfamily. Heterodimer; disulfide-linked. The A chains have phospholipase A2 activity and the B chains show homology with the basic protease inhibitors. The A3 chain is found in beta-5 bungarotoxins. Requires Ca(2+) as cofactor. In terms of tissue distribution, expressed by the venom gland.

The protein resides in the secreted. It catalyses the reaction a 1,2-diacyl-sn-glycero-3-phosphocholine + H2O = a 1-acyl-sn-glycero-3-phosphocholine + a fatty acid + H(+). In terms of biological role, snake venom phospholipase A2 (PLA2) that inhibits neuromuscular transmission by blocking acetylcholine release from the nerve termini. PLA2 catalyzes the calcium-dependent hydrolysis of the 2-acyl groups in 3-sn-phosphoglycerides. In Bungarus multicinctus (Many-banded krait), this protein is Acidic phospholipase A2 beta-bungarotoxin A3 chain.